A 140-amino-acid chain; its full sequence is 3-hydroxyacyl-[acyl-carrier-protein] dehydratase FabZ (140 aa).

Histidine 48 is an active-site residue.

This sequence belongs to the thioester dehydratase family. FabZ subfamily.

It is found in the cytoplasm. It carries out the reaction a (3R)-hydroxyacyl-[ACP] = a (2E)-enoyl-[ACP] + H2O. Functionally, involved in unsaturated fatty acids biosynthesis. Catalyzes the dehydration of short chain beta-hydroxyacyl-ACPs and long chain saturated and unsaturated beta-hydroxyacyl-ACPs. This is 3-hydroxyacyl-[acyl-carrier-protein] dehydratase FabZ from Caldicellulosiruptor bescii (strain ATCC BAA-1888 / DSM 6725 / KCTC 15123 / Z-1320) (Anaerocellum thermophilum).